We begin with the raw amino-acid sequence, 391 residues long: tRNA-specific 2-thiouridylase MnmA (391 aa).

Residues 20-27 (AMSGGVDS) and Leu-46 contribute to the ATP site. Cys-114 acts as the Nucleophile in catalysis. An intrachain disulfide couples Cys-114 to Cys-210. Residue Gly-138 participates in ATP binding. The tract at residues 160–162 (RDQ) is interaction with tRNA. Residue Cys-210 is the Cysteine persulfide intermediate of the active site.

This sequence belongs to the MnmA/TRMU family.

Its subcellular location is the cytoplasm. The enzyme catalyses S-sulfanyl-L-cysteinyl-[protein] + uridine(34) in tRNA + AH2 + ATP = 2-thiouridine(34) in tRNA + L-cysteinyl-[protein] + A + AMP + diphosphate + H(+). Its function is as follows. Catalyzes the 2-thiolation of uridine at the wobble position (U34) of tRNA, leading to the formation of s(2)U34. In Bartonella bacilliformis (strain ATCC 35685 / KC583 / Herrer 020/F12,63), this protein is tRNA-specific 2-thiouridylase MnmA.